Reading from the N-terminus, the 199-residue chain is Prefoldin subunit 3 (199 aa).

Methionine 1 is subject to N-acetylmethionine.

This sequence belongs to the prefoldin subunit alpha family. In terms of assembly, heterohexamer of two PFD-alpha type and four PFD-beta type subunits.

Binds specifically to cytosolic chaperonin (c-CPN) and transfers target proteins to it. Binds to nascent polypeptide chain and promotes folding in an environment in which there are many competing pathways for nonnative proteins. In Saccharomyces cerevisiae (strain ATCC 204508 / S288c) (Baker's yeast), this protein is Prefoldin subunit 3 (PAC10).